Consider the following 460-residue polypeptide: Acetyl-coenzyme A carboxylase carboxyl transferase subunit beta, chloroplastic (460 aa).

The CoA carboxyltransferase N-terminal domain maps to 179 to 460 (LWVQCESCYG…GFFPLTQNGN (282 aa)). The Zn(2+) site is built by C183, C186, C202, and C205. The C4-type zinc-finger motif lies at 183–205 (CESCYGLNYKKFFKSKMNICEHC).

It belongs to the AccD/PCCB family. In terms of assembly, acetyl-CoA carboxylase is a heterohexamer composed of biotin carboxyl carrier protein, biotin carboxylase and 2 subunits each of ACCase subunit alpha and ACCase plastid-coded subunit beta (accD). Zn(2+) is required as a cofactor.

It localises to the plastid. The protein resides in the chloroplast stroma. It catalyses the reaction N(6)-carboxybiotinyl-L-lysyl-[protein] + acetyl-CoA = N(6)-biotinyl-L-lysyl-[protein] + malonyl-CoA. The protein operates within lipid metabolism; malonyl-CoA biosynthesis; malonyl-CoA from acetyl-CoA: step 1/1. Functionally, component of the acetyl coenzyme A carboxylase (ACC) complex. Biotin carboxylase (BC) catalyzes the carboxylation of biotin on its carrier protein (BCCP) and then the CO(2) group is transferred by the transcarboxylase to acetyl-CoA to form malonyl-CoA. The chain is Acetyl-coenzyme A carboxylase carboxyl transferase subunit beta, chloroplastic from Cicer arietinum (Chickpea).